A 295-amino-acid polypeptide reads, in one-letter code: Protoheme IX farnesyltransferase (295 aa).

9 helical membrane-spanning segments follow: residues 8 to 28, 35 to 55, 83 to 103, 107 to 127, 132 to 152, 162 to 182, 208 to 228, 229 to 249, and 263 to 283; these read ITKP…FFLA, GGLF…GCVF, GVTL…LWFG, LATA…SLYL, IYGT…GYCA, LTLL…IAIF, IFWY…GGYA, GYGY…MALR, and VFIF…IDFQ.

The protein belongs to the UbiA prenyltransferase family. Protoheme IX farnesyltransferase subfamily.

It localises to the cell inner membrane. It catalyses the reaction heme b + (2E,6E)-farnesyl diphosphate + H2O = Fe(II)-heme o + diphosphate. It functions in the pathway porphyrin-containing compound metabolism; heme O biosynthesis; heme O from protoheme: step 1/1. Its function is as follows. Converts heme B (protoheme IX) to heme O by substitution of the vinyl group on carbon 2 of heme B porphyrin ring with a hydroxyethyl farnesyl side group. The chain is Protoheme IX farnesyltransferase from Chromohalobacter salexigens (strain ATCC BAA-138 / DSM 3043 / CIP 106854 / NCIMB 13768 / 1H11).